Consider the following 211-residue polypeptide: Probable GTP-binding protein EngB (211 aa).

Positions 26 to 200 constitute an EngB-type G domain; sequence SGIEIAFAGR…RQKLDDWFAA (175 aa). GTP-binding positions include 34–41, 61–65, 79–82, 146–149, and 179–181; these read GRSNAGKS, GRTRL, DLPG, TKAD, and FSS. Positions 41 and 63 each coordinate Mg(2+).

Belongs to the TRAFAC class TrmE-Era-EngA-EngB-Septin-like GTPase superfamily. EngB GTPase family. Mg(2+) serves as cofactor.

Functionally, necessary for normal cell division and for the maintenance of normal septation. This is Probable GTP-binding protein EngB from Sodalis glossinidius (strain morsitans).